The following is a 297-amino-acid chain: Alpha-tubulin N-acetyltransferase 1 (297 aa).

In terms of domain architecture, N-acetyltransferase spans 1-186 (MEFDFDVHKI…NNFVVFDGFF (186 aa)). Acetyl-CoA-binding positions include 120–133 (FYIHETLQRHGFGK) and 156–165 (SEKFLSFLRK). Residues 269-297 (LHRTANSEQEDHSQRRRTSSLNRPQSIHH) are disordered. A compositionally biased stretch (polar residues) spans 287–297 (SSLNRPQSIHH).

This sequence belongs to the acetyltransferase ATAT1 family.

The protein resides in the cytoplasm. It is found in the membrane. The protein localises to the clathrin-coated pit. It localises to the cell junction. Its subcellular location is the focal adhesion. The protein resides in the cell projection. It is found in the axon. The protein localises to the cytoskeleton. It localises to the spindle. The enzyme catalyses L-lysyl-[alpha-tubulin] + acetyl-CoA = N(6)-acetyl-L-lysyl-[alpha-tubulin] + CoA + H(+). Functionally, specifically acetylates 'Lys-40' in alpha-tubulin on the lumenal side of microtubules. Promotes microtubule destabilization and accelerates microtubule dynamics; this activity may be independent of acetylation activity. Acetylates alpha-tubulin with a slow enzymatic rate, due to a catalytic site that is not optimized for acetyl transfer. Enters the microtubule through each end and diffuses quickly throughout the lumen of microtubules. Acetylates only long/old microtubules because of its slow acetylation rate since it does not have time to act on dynamically unstable microtubules before the enzyme is released. May be involved in neuron development. This chain is Alpha-tubulin N-acetyltransferase 1, found in Xenopus tropicalis (Western clawed frog).